Reading from the N-terminus, the 422-residue chain is Proline--tRNA ligase (422 aa).

Belongs to the class-II aminoacyl-tRNA synthetase family. ProS type 2 subfamily. Homodimer.

The protein localises to the cytoplasm. It catalyses the reaction tRNA(Pro) + L-proline + ATP = L-prolyl-tRNA(Pro) + AMP + diphosphate. In terms of biological role, catalyzes the attachment of proline to tRNA(Pro) in a two-step reaction: proline is first activated by ATP to form Pro-AMP and then transferred to the acceptor end of tRNA(Pro). The protein is Proline--tRNA ligase of Wolbachia sp. subsp. Drosophila simulans (strain wRi).